A 229-amino-acid polypeptide reads, in one-letter code: Secreted RxLR effector protein PITG_22926 (229 aa).

Residues 1-23 (MRCNHTLCVVAITFLVSWSQTLS) form the signal peptide. A RxLR-dEER motif is present at residues 34–45 (PLVRSVSATEER).

This sequence belongs to the RxLR effector family.

Its subcellular location is the secreted. It localises to the host nucleus. Its function is as follows. Secreted effector that acts as a RNA silencing suppressor, probably by inhibiting the biogenesis of small RNAs in the host plant, to manipulate host immune responses and promote Phytophthora infection. The polypeptide is Secreted RxLR effector protein PITG_22926 (Phytophthora infestans (strain T30-4) (Potato late blight agent)).